An 89-amino-acid polypeptide reads, in one-letter code: Pigment dispersing factor homolog pdf-2 (89 aa).

An N-terminal signal peptide occupies residues 1 to 27; the sequence is MSSRISVSLLLLAVVATMFFTANVVDA.

Probable ligand of isoforms a and b of the calcitonin receptor-like protein, pdfr-1, a G-protein coupled receptor. May not signal through isoform c of pdfr-1. Involved in locomotion; may play a role in circadian rhythms of locomotor activity. Modulator of egg-laying. This is Pigment dispersing factor homolog pdf-2 from Caenorhabditis elegans.